Here is a 435-residue protein sequence, read N- to C-terminus: Protein GOLM2 (435 aa).

The residue at position 1 (methionine 1) is an N-acetylmethionine. Residues methionine 1 to proline 14 are Cytoplasmic-facing. Residues serine 15–isoleucine 35 form a helical; Signal-anchor for type II membrane protein membrane-spanning segment. Residues isoleucine 35–threonine 194 are a coiled coil. The Lumenal segment spans residues serine 36–leucine 435. Composition is skewed to basic and acidic residues over residues glutamine 191–alanine 212 and aspartate 223–lysine 239. Disordered regions lie at residues glutamine 191–lysine 239 and proline 271–leucine 435. A Phosphoserine modification is found at serine 232. Composition is skewed to polar residues over residues glutamine 282–serine 294 and histidine 302–leucine 320. Positions alanine 343–aspartate 361 are enriched in basic and acidic residues. Position 365 is a phosphoserine (serine 365). A compositionally biased stretch (acidic residues) spans tyrosine 398–arginine 417. The span at aspartate 425–leucine 435 shows a compositional bias: basic and acidic residues.

Belongs to the GOLM family.

It is found in the membrane. The protein is Protein GOLM2 of Mus musculus (Mouse).